Consider the following 564-residue polypeptide: MAQVQRMSRLMVKTLRDDPADAETLNHKLLVRADYVRRTAAGIWSWLPLGKKVLENVARVVREEMDAMGGQEVLLPALLPKEPYEATGRWEEYGPELFRLKDRKGAEYLLGPTHEEIFTQLVKDQCSSYKDLPVILYQIQAKYRDEARPRAGILRGREFLMKDSYSFDTADEGLAQSYALHREAYIKIFNRLGLDHRIVSAVSGAMGGSASEEFLAPAPAGEDTFVDCPACDYAANTEAVTFVAPAVESVEHPAVEELDTPDTPTIESLAEYLGVPASATLKNLLVKADGEIVAVGVPGDREVDLGKLGEHLAPAVVELVTAEDFEGRDDLVRGYVGPQGLEKVRYIADPRVAPGTAWITGANKINTHAKNVVAGRDFEVDDYLDVVVVEEGDPCPSCGTGLRLDRAIEIGHIFQLGRKYADAFQLDVLGKEGKPVRVTMGSYGIGVSRAVAALAEQTADEQGLCWPKEIAPADVHVVAAGKALQTELALDVAEKLGAAGVRVLVDDRAGVSPGVKFTDAELIGVPQILVAGRRSAEGVLELKDRKTGEREELTVEEAIARLSA.

The protein belongs to the class-II aminoacyl-tRNA synthetase family. ProS type 1 subfamily. Homodimer.

It localises to the cytoplasm. The catalysed reaction is tRNA(Pro) + L-proline + ATP = L-prolyl-tRNA(Pro) + AMP + diphosphate. Catalyzes the attachment of proline to tRNA(Pro) in a two-step reaction: proline is first activated by ATP to form Pro-AMP and then transferred to the acceptor end of tRNA(Pro). As ProRS can inadvertently accommodate and process non-cognate amino acids such as alanine and cysteine, to avoid such errors it has two additional distinct editing activities against alanine. One activity is designated as 'pretransfer' editing and involves the tRNA(Pro)-independent hydrolysis of activated Ala-AMP. The other activity is designated 'posttransfer' editing and involves deacylation of mischarged Ala-tRNA(Pro). The misacylated Cys-tRNA(Pro) is not edited by ProRS. This Streptomyces avermitilis (strain ATCC 31267 / DSM 46492 / JCM 5070 / NBRC 14893 / NCIMB 12804 / NRRL 8165 / MA-4680) protein is Proline--tRNA ligase 1.